An 84-amino-acid polypeptide reads, in one-letter code: U21-theraphotoxin-Cg1c (84 aa).

The first 21 residues, 1 to 21, serve as a signal peptide directing secretion; the sequence is MKVSVLITLAVLGVMFLLTSA. Residues 22 to 47 constitute a propeptide that is removed on maturation; that stretch reads EERGSDQMDSPAWLKSMERIFQSEER. 3 cysteine pairs are disulfide-bonded: Cys49/Cys63, Cys56/Cys68, and Cys62/Cys76.

It belongs to the neurotoxin 10 (Hwtx-1) family. 05 (F4a) subfamily. Expressed by the venom gland.

It localises to the secreted. Probable ion channel inhibitor. The polypeptide is U21-theraphotoxin-Cg1c (Chilobrachys guangxiensis (Chinese earth tiger tarantula)).